The primary structure comprises 361 residues: 3-dehydroquinate synthase (361 aa).

Belongs to the archaeal-type DHQ synthase family.

It carries out the reaction 2-amino-2,3,7-trideoxy-D-lyxo-hept-6-ulosonate + NAD(+) + H2O = 3-dehydroquinate + NH4(+) + NADH + H(+). Catalyzes the oxidative deamination and cyclization of 2-amino-3,7-dideoxy-D-threo-hept-6-ulosonic acid (ADH) to yield 3-dehydroquinate (DHQ), which is fed into the canonical shikimic pathway of aromatic amino acid biosynthesis. In Methanocaldococcus jannaschii (strain ATCC 43067 / DSM 2661 / JAL-1 / JCM 10045 / NBRC 100440) (Methanococcus jannaschii), this protein is 3-dehydroquinate synthase (aroB').